The sequence spans 255 residues: Ribonuclease HII (255 aa).

An RNase H type-2 domain is found at 72-255 (AIICGIDEVG…KSFEPIKSLL (184 aa)). Positions 78, 79, and 170 each coordinate a divalent metal cation.

This sequence belongs to the RNase HII family. The cofactor is Mn(2+). Requires Mg(2+) as cofactor.

It is found in the cytoplasm. It catalyses the reaction Endonucleolytic cleavage to 5'-phosphomonoester.. Functionally, endonuclease that specifically degrades the RNA of RNA-DNA hybrids. The chain is Ribonuclease HII from Staphylococcus aureus (strain Mu3 / ATCC 700698).